The sequence spans 146 residues: Hemoglobin subunit beta-1 (146 aa).

The Globin domain maps to His-2–His-146. His-63 and His-92 together coordinate heme b.

This sequence belongs to the globin family. Hb1 is a heterotetramer of two alpha chains and two beta-1 chains. Red blood cells.

Involved in oxygen transport from gills to the various peripheral tissues. The chain is Hemoglobin subunit beta-1 from Dissostichus eleginoides (Patagonian toothfish).